The following is a 341-amino-acid chain: Holliday junction branch migration complex subunit RuvB (341 aa).

A large ATPase domain (RuvB-L) region spans residues 1–180; sequence MAKSHTLNPE…FGIQLRLDYY (180 aa). ATP contacts are provided by L19, R20, G61, K64, T65, T66, R170, Y180, and R217. Residue T65 participates in Mg(2+) binding. A small ATPAse domain (RuvB-S) region spans residues 181–251; it reads NDEEMKQIVL…LCLKAFEKMG (71 aa). The tract at residues 254–341 is head domain (RuvB-H); the sequence is DLGLDGMDRQ…VHHGQDPTLF (88 aa). DNA-binding residues include R309 and R314.

Belongs to the RuvB family. Homohexamer. Forms an RuvA(8)-RuvB(12)-Holliday junction (HJ) complex. HJ DNA is sandwiched between 2 RuvA tetramers; dsDNA enters through RuvA and exits via RuvB. An RuvB hexamer assembles on each DNA strand where it exits the tetramer. Each RuvB hexamer is contacted by two RuvA subunits (via domain III) on 2 adjacent RuvB subunits; this complex drives branch migration. In the full resolvosome a probable DNA-RuvA(4)-RuvB(12)-RuvC(2) complex forms which resolves the HJ.

It is found in the cytoplasm. It catalyses the reaction ATP + H2O = ADP + phosphate + H(+). In terms of biological role, the RuvA-RuvB-RuvC complex processes Holliday junction (HJ) DNA during genetic recombination and DNA repair, while the RuvA-RuvB complex plays an important role in the rescue of blocked DNA replication forks via replication fork reversal (RFR). RuvA specifically binds to HJ cruciform DNA, conferring on it an open structure. The RuvB hexamer acts as an ATP-dependent pump, pulling dsDNA into and through the RuvAB complex. RuvB forms 2 homohexamers on either side of HJ DNA bound by 1 or 2 RuvA tetramers; 4 subunits per hexamer contact DNA at a time. Coordinated motions by a converter formed by DNA-disengaged RuvB subunits stimulates ATP hydrolysis and nucleotide exchange. Immobilization of the converter enables RuvB to convert the ATP-contained energy into a lever motion, pulling 2 nucleotides of DNA out of the RuvA tetramer per ATP hydrolyzed, thus driving DNA branch migration. The RuvB motors rotate together with the DNA substrate, which together with the progressing nucleotide cycle form the mechanistic basis for DNA recombination by continuous HJ branch migration. Branch migration allows RuvC to scan DNA until it finds its consensus sequence, where it cleaves and resolves cruciform DNA. This chain is Holliday junction branch migration complex subunit RuvB, found in Leptospira interrogans serogroup Icterohaemorrhagiae serovar copenhageni (strain Fiocruz L1-130).